The primary structure comprises 181 residues: Large ribosomal subunit protein uL6 (181 aa).

Belongs to the universal ribosomal protein uL6 family. As to quaternary structure, part of the 50S ribosomal subunit.

Its function is as follows. This protein binds to the 23S rRNA, and is important in its secondary structure. It is located near the subunit interface in the base of the L7/L12 stalk, and near the tRNA binding site of the peptidyltransferase center. This chain is Large ribosomal subunit protein uL6, found in Rhodopirellula baltica (strain DSM 10527 / NCIMB 13988 / SH1).